We begin with the raw amino-acid sequence, 195 residues long: Peptidyl-tRNA hydrolase (195 aa).

Residue Tyr-14 coordinates tRNA. The active-site Proton acceptor is the His-19. The tRNA site is built by Tyr-64 and Asn-66.

It belongs to the PTH family. As to quaternary structure, monomer.

Its subcellular location is the cytoplasm. It carries out the reaction an N-acyl-L-alpha-aminoacyl-tRNA + H2O = an N-acyl-L-amino acid + a tRNA + H(+). Functionally, hydrolyzes ribosome-free peptidyl-tRNAs (with 1 or more amino acids incorporated), which drop off the ribosome during protein synthesis, or as a result of ribosome stalling. Catalyzes the release of premature peptidyl moieties from peptidyl-tRNA molecules trapped in stalled 50S ribosomal subunits, and thus maintains levels of free tRNAs and 50S ribosomes. The sequence is that of Peptidyl-tRNA hydrolase from Desulforudis audaxviator (strain MP104C).